Here is a 146-residue protein sequence, read N- to C-terminus: Probable glycine cleavage system H protein 1, mitochondrial (146 aa).

The transit peptide at 1–30 (MLKTLRFGTRAFGQNLNIAKRNFCTRYTND) directs the protein to the mitochondrion. One can recognise a Lipoyl-binding domain in the interval 41-123 (NYRLGITDFA…MGDGWIVEYK (83 aa)). Lys-82 carries the N6-lipoyllysine modification.

It belongs to the GcvH family. The glycine cleavage system is composed of four proteins: P, T, L and H. The cofactor is (R)-lipoate.

It is found in the mitochondrion. Its function is as follows. The glycine cleavage system catalyzes the degradation of glycine. The H protein shuttles the methylamine group of glycine from the P protein to the T protein. The chain is Probable glycine cleavage system H protein 1, mitochondrial (gcvH1) from Dictyostelium discoideum (Social amoeba).